A 369-amino-acid polypeptide reads, in one-letter code: Putative FAD-dependent monooxygenase YetM (369 aa).

The N-terminal stretch at 1–32 (MKHMLIAGGGIGGLSAAISLRKAGFSVTLCEA) is a signal peptide. Residues Gly-12, 31 to 32 (EA), Val-126, and Asp-285 contribute to the FAD site.

The cofactor is FAD.

The chain is Putative FAD-dependent monooxygenase YetM (yetM) from Bacillus subtilis (strain 168).